We begin with the raw amino-acid sequence, 463 residues long: ATP synthase subunit beta (463 aa).

152-159 (GGAGVGKT) is a binding site for ATP.

It belongs to the ATPase alpha/beta chains family. F-type ATPases have 2 components, CF(1) - the catalytic core - and CF(0) - the membrane proton channel. CF(1) has five subunits: alpha(3), beta(3), gamma(1), delta(1), epsilon(1). CF(0) has three main subunits: a(1), b(2) and c(9-12). The alpha and beta chains form an alternating ring which encloses part of the gamma chain. CF(1) is attached to CF(0) by a central stalk formed by the gamma and epsilon chains, while a peripheral stalk is formed by the delta and b chains.

It is found in the cell inner membrane. The catalysed reaction is ATP + H2O + 4 H(+)(in) = ADP + phosphate + 5 H(+)(out). Produces ATP from ADP in the presence of a proton gradient across the membrane. The catalytic sites are hosted primarily by the beta subunits. The protein is ATP synthase subunit beta of Shewanella sp. (strain MR-7).